A 334-amino-acid chain; its full sequence is Phosphoribosylformylglycinamidine cyclo-ligase (334 aa).

Belongs to the AIR synthase family.

Its subcellular location is the cytoplasm. The catalysed reaction is 2-formamido-N(1)-(5-O-phospho-beta-D-ribosyl)acetamidine + ATP = 5-amino-1-(5-phospho-beta-D-ribosyl)imidazole + ADP + phosphate + H(+). Its pathway is purine metabolism; IMP biosynthesis via de novo pathway; 5-amino-1-(5-phospho-D-ribosyl)imidazole from N(2)-formyl-N(1)-(5-phospho-D-ribosyl)glycinamide: step 2/2. The protein is Phosphoribosylformylglycinamidine cyclo-ligase of Pyrococcus horikoshii (strain ATCC 700860 / DSM 12428 / JCM 9974 / NBRC 100139 / OT-3).